The primary structure comprises 209 residues: Thymidine kinase (209 aa).

ATP contacts are provided by residues 9–16 (SAMNAGKT) and 88–91 (DEAQ). E89 functions as the Proton acceptor in the catalytic mechanism.

Belongs to the thymidine kinase family. Homotetramer.

The protein resides in the cytoplasm. It carries out the reaction thymidine + ATP = dTMP + ADP + H(+). This chain is Thymidine kinase, found in Xanthomonas oryzae pv. oryzae (strain MAFF 311018).